A 323-amino-acid polypeptide reads, in one-letter code: Small ribosomal subunit protein uS9m (323 aa).

Residues 298–323 (TRDARKVERKKPGKVKARKSPTWVKR) form a disordered region. The span at 304-323 (VERKKPGKVKARKSPTWVKR) shows a compositional bias: basic residues.

Belongs to the universal ribosomal protein uS9 family.

The protein resides in the mitochondrion. This Debaryomyces hansenii (strain ATCC 36239 / CBS 767 / BCRC 21394 / JCM 1990 / NBRC 0083 / IGC 2968) (Yeast) protein is Small ribosomal subunit protein uS9m (MRPS9).